A 652-amino-acid chain; its full sequence is Apicoplast pyruvate carrier 2 (652 aa).

The Cytoplasmic segment spans residues 1–45 (MSAFPASPQPSAFPASPQPSAFPASPQPSASPVSPRHCVSPSSGT). Residues 1 to 53 (MSAFPASPQPSAFPASPQPSAFPASPQPSASPVSPRHCVSPSSGTLPSSSSPS) form a disordered region. The next 12 helical transmembrane spans lie at 46-66 (LPSS…SSSS), 126-146 (NLLP…AVSY), 167-187 (GTTL…SAWM), 189-209 (LGLA…IAYG), 212-232 (TALG…KLSP), 278-298 (LPYL…SSLN), 345-365 (LVDP…AERQ), 385-405 (SCSA…ICSS), 417-437 (LSWQ…LYPE), 445-465 (AAPA…PRAL), 467-487 (SASR…SLTG), and 515-535 (LWGY…MNAL). Topologically, residues 536-652 (TAPCLFALST…LPYRFPTYSP (117 aa)) are cytoplasmic.

It belongs to the major facilitator superfamily. As to quaternary structure, interacts with apicoplast pyruvate carrier 1.

Its subcellular location is the plastid. It is found in the apicoplast. The protein resides in the membrane. Functionally, along with apicoplast pyruvate carrier 1, forms apicoplast pyruvate carrier (APC) complex, which transports pyruvate into the apicoplast and may also transport amino acids like methionine, serine, glycine and tryptophan with low efficiency. Required for maintaining pyruvate-dependent metabolic activities in the apicoplast, such as synthesis of fatty acids, isopentenyl pyrophosphate (IPP), dimethylallyl pyrophosphate (DMAPP) and methylerythritol 4-phosphate (MEP). Required for maintaining the integrity of the apicoplast. Required for normal parasite growth. This chain is Apicoplast pyruvate carrier 2, found in Toxoplasma gondii.